The chain runs to 181 residues: Transcriptional repressor NrdR (181 aa).

A zinc finger lies at 3–34 (CLFCQHTYTRVIDSRVSEDGATIRRRRECEAC). The ATP-cone domain maps to 49 to 139 (PVIIKKDGGR…VYRSFQDVAD (91 aa)).

This sequence belongs to the NrdR family. Requires Zn(2+) as cofactor.

Functionally, negatively regulates transcription of bacterial ribonucleotide reductase nrd genes and operons by binding to NrdR-boxes. In Xylella fastidiosa (strain 9a5c), this protein is Transcriptional repressor NrdR.